Consider the following 194-residue polypeptide: Leucyl/phenylalanyl-tRNA--protein transferase (194 aa).

This sequence belongs to the L/F-transferase family.

It is found in the cytoplasm. The catalysed reaction is N-terminal L-lysyl-[protein] + L-leucyl-tRNA(Leu) = N-terminal L-leucyl-L-lysyl-[protein] + tRNA(Leu) + H(+). It carries out the reaction N-terminal L-arginyl-[protein] + L-leucyl-tRNA(Leu) = N-terminal L-leucyl-L-arginyl-[protein] + tRNA(Leu) + H(+). The enzyme catalyses L-phenylalanyl-tRNA(Phe) + an N-terminal L-alpha-aminoacyl-[protein] = an N-terminal L-phenylalanyl-L-alpha-aminoacyl-[protein] + tRNA(Phe). In terms of biological role, functions in the N-end rule pathway of protein degradation where it conjugates Leu, Phe and, less efficiently, Met from aminoacyl-tRNAs to the N-termini of proteins containing an N-terminal arginine or lysine. The chain is Leucyl/phenylalanyl-tRNA--protein transferase from Chlorobaculum parvum (strain DSM 263 / NCIMB 8327) (Chlorobium vibrioforme subsp. thiosulfatophilum).